The primary structure comprises 472 residues: Putative diacyglycerol O-acyltransferase MT3172 (472 aa).

The active-site Proton acceptor is the H139. The segment at 217–238 is disordered; that stretch reads DRRVPPTFDRSAPPGPFQRGLS.

It belongs to the long-chain O-acyltransferase family.

The catalysed reaction is an acyl-CoA + a 1,2-diacyl-sn-glycerol = a triacyl-sn-glycerol + CoA. It participates in glycerolipid metabolism; triacylglycerol biosynthesis. The chain is Putative diacyglycerol O-acyltransferase MT3172 from Mycobacterium tuberculosis (strain CDC 1551 / Oshkosh).